Reading from the N-terminus, the 122-residue chain is Small ribosomal subunit protein uS13 (122 aa).

Residues Val98–Lys122 form a disordered region.

Belongs to the universal ribosomal protein uS13 family. Part of the 30S ribosomal subunit. Forms a loose heterodimer with protein S19. Forms two bridges to the 50S subunit in the 70S ribosome.

Its function is as follows. Located at the top of the head of the 30S subunit, it contacts several helices of the 16S rRNA. In the 70S ribosome it contacts the 23S rRNA (bridge B1a) and protein L5 of the 50S subunit (bridge B1b), connecting the 2 subunits; these bridges are implicated in subunit movement. Contacts the tRNAs in the A and P-sites. The protein is Small ribosomal subunit protein uS13 of Ruegeria pomeroyi (strain ATCC 700808 / DSM 15171 / DSS-3) (Silicibacter pomeroyi).